A 402-amino-acid polypeptide reads, in one-letter code: F-box/kelch-repeat protein At4g39590 (402 aa).

A compositionally biased stretch (low complexity) spans 1–14; it reads MFPMSSTSRSSAAN. The tract at residues 1–37 is disordered; the sequence is MFPMSSTSRSSAANNRKDPPRKKNKETPSPVTREPTS. Residues 27 to 37 show a composition bias toward polar residues; the sequence is TPSPVTREPTS. The region spanning 35-81 is the F-box domain; that stretch reads PTSIDSLPNDLLLNCFARVSRMYYPALSRVSKRFRSIVTSPEIYNTR. Kelch repeat units lie at residues 143 to 198, 199 to 246, 255 to 300, and 302 to 341; these read NIYR…VVDG, KIYV…YRRA, KLYL…LFYW, and QGVF…DLGG.

The polypeptide is F-box/kelch-repeat protein At4g39590 (Arabidopsis thaliana (Mouse-ear cress)).